A 206-amino-acid chain; its full sequence is 3-demethoxyubiquinol 3-hydroxylase (206 aa).

Residues Glu55, Glu85, His88, Glu137, Glu169, and His172 each coordinate Fe cation.

The protein belongs to the COQ7 family. Fe cation is required as a cofactor.

Its subcellular location is the cell membrane. The catalysed reaction is a 5-methoxy-2-methyl-3-(all-trans-polyprenyl)benzene-1,4-diol + AH2 + O2 = a 3-demethylubiquinol + A + H2O. It participates in cofactor biosynthesis; ubiquinone biosynthesis. Functionally, catalyzes the hydroxylation of 2-nonaprenyl-3-methyl-6-methoxy-1,4-benzoquinol during ubiquinone biosynthesis. The protein is 3-demethoxyubiquinol 3-hydroxylase of Azoarcus sp. (strain BH72).